Reading from the N-terminus, the 262-residue chain is Polyamine aminopropyltransferase (262 aa).

In terms of domain architecture, PABS spans 1–249 (MWITQEITPY…DIHRAAFALP (249 aa)). Asparagine 29 provides a ligand contact to S-methyl-5'-thioadenosine. Aspartate 83 lines the spermidine pocket. The active-site Proton acceptor is the aspartate 155.

The protein belongs to the spermidine/spermine synthase family. Homodimer or homotetramer.

It is found in the cytoplasm. The catalysed reaction is S-adenosyl 3-(methylsulfanyl)propylamine + putrescine = S-methyl-5'-thioadenosine + spermidine + H(+). It functions in the pathway amine and polyamine biosynthesis; spermidine biosynthesis; spermidine from putrescine: step 1/1. Its function is as follows. Catalyzes the irreversible transfer of a propylamine group from the amino donor S-adenosylmethioninamine (decarboxy-AdoMet) to putrescine (1,4-diaminobutane) to yield spermidine. This chain is Polyamine aminopropyltransferase, found in Helicobacter pylori (strain P12).